We begin with the raw amino-acid sequence, 275 residues long: NH(3)-dependent NAD(+) synthetase (275 aa).

50-57 (GISGGVDS) contributes to the ATP binding site. Asp56 contacts Mg(2+). Position 147 (Arg147) interacts with deamido-NAD(+). Position 167 (Thr167) interacts with ATP. Glu172 contacts Mg(2+). Positions 180 and 187 each coordinate deamido-NAD(+). Lys196 and Thr218 together coordinate ATP. Deamido-NAD(+) is bound at residue 267-268 (HK).

The protein belongs to the NAD synthetase family. As to quaternary structure, homodimer.

It catalyses the reaction deamido-NAD(+) + NH4(+) + ATP = AMP + diphosphate + NAD(+) + H(+). Its pathway is cofactor biosynthesis; NAD(+) biosynthesis; NAD(+) from deamido-NAD(+) (ammonia route): step 1/1. Functionally, catalyzes the ATP-dependent amidation of deamido-NAD to form NAD. Uses ammonia as a nitrogen source. This chain is NH(3)-dependent NAD(+) synthetase, found in Pseudomonas putida (strain ATCC 700007 / DSM 6899 / JCM 31910 / BCRC 17059 / LMG 24140 / F1).